Here is a 221-residue protein sequence, read N- to C-terminus: Ribonuclease T (221 aa).

The 175-residue stretch at 20 to 194 (VVIDIETAGF…YDTLQTANLF (175 aa)) folds into the Exonuclease domain. Asp-23, Glu-25, His-181, and Asp-186 together coordinate Mg(2+). His-181 serves as the catalytic Proton donor/acceptor.

It belongs to the RNase T family. As to quaternary structure, homodimer. Mg(2+) serves as cofactor.

Functionally, trims short 3' overhangs of a variety of RNA species, leaving a one or two nucleotide 3' overhang. Responsible for the end-turnover of tRNA: specifically removes the terminal AMP residue from uncharged tRNA (tRNA-C-C-A). Also appears to be involved in tRNA biosynthesis. The chain is Ribonuclease T from Buchnera aphidicola subsp. Acyrthosiphon pisum (strain APS) (Acyrthosiphon pisum symbiotic bacterium).